The following is a 360-amino-acid chain: Aminomethyltransferase (360 aa).

This sequence belongs to the GcvT family. As to quaternary structure, the glycine cleavage system is composed of four proteins: P, T, L and H.

It catalyses the reaction N(6)-[(R)-S(8)-aminomethyldihydrolipoyl]-L-lysyl-[protein] + (6S)-5,6,7,8-tetrahydrofolate = N(6)-[(R)-dihydrolipoyl]-L-lysyl-[protein] + (6R)-5,10-methylene-5,6,7,8-tetrahydrofolate + NH4(+). In terms of biological role, the glycine cleavage system catalyzes the degradation of glycine. This is Aminomethyltransferase from Flavobacterium psychrophilum (strain ATCC 49511 / DSM 21280 / CIP 103535 / JIP02/86).